We begin with the raw amino-acid sequence, 262 residues long: Type III pantothenate kinase (262 aa).

6 to 13 is an ATP binding site; sequence DAGNTNMV. Substrate contacts are provided by residues tyrosine 100 and 107-110; that span reads GADR. Aspartate 109 acts as the Proton acceptor in catalysis. Aspartate 129 is a binding site for K(+). Threonine 132 is a binding site for ATP. Threonine 184 provides a ligand contact to substrate.

Belongs to the type III pantothenate kinase family. Homodimer. Requires NH4(+) as cofactor. It depends on K(+) as a cofactor.

Its subcellular location is the cytoplasm. It catalyses the reaction (R)-pantothenate + ATP = (R)-4'-phosphopantothenate + ADP + H(+). Its pathway is cofactor biosynthesis; coenzyme A biosynthesis; CoA from (R)-pantothenate: step 1/5. In terms of biological role, catalyzes the phosphorylation of pantothenate (Pan), the first step in CoA biosynthesis. The sequence is that of Type III pantothenate kinase from Clostridium tetani (strain Massachusetts / E88).